The following is a 591-amino-acid chain: UvrABC system protein C (591 aa).

Positions 14 to 91 constitute a GIY-YIG domain; that stretch reads DQPGCYLMKD…IKKHDPKYNV (78 aa). In terms of domain architecture, UVR spans 196–231; it reads KEVKVELEKKMHKAAEELNFERAKELRDTLGYMEAV.

This sequence belongs to the UvrC family. In terms of assembly, interacts with UvrB in an incision complex.

It localises to the cytoplasm. Functionally, the UvrABC repair system catalyzes the recognition and processing of DNA lesions. UvrC both incises the 5' and 3' sides of the lesion. The N-terminal half is responsible for the 3' incision and the C-terminal half is responsible for the 5' incision. In Halalkalibacterium halodurans (strain ATCC BAA-125 / DSM 18197 / FERM 7344 / JCM 9153 / C-125) (Bacillus halodurans), this protein is UvrABC system protein C.